The sequence spans 393 residues: Elongation factor Tu (393 aa).

The 193-residue stretch at 10–202 (KPHVNIGTIG…AVDEYIPTPE (193 aa)) folds into the tr-type G domain. Residues 19–26 (GHVDHGKT) are G1. 19–26 (GHVDHGKT) contributes to the GTP binding site. Threonine 26 contacts Mg(2+). Residues 60–64 (GITIN) are G2. The segment at 81 to 84 (DCPG) is G3. GTP is bound by residues 81–85 (DCPGH) and 136–139 (NKAD). Residues 136–139 (NKAD) form a G4 region. The interval 174–176 (SAL) is G5.

It belongs to the TRAFAC class translation factor GTPase superfamily. Classic translation factor GTPase family. EF-Tu/EF-1A subfamily. As to quaternary structure, monomer.

The protein localises to the cytoplasm. The enzyme catalyses GTP + H2O = GDP + phosphate + H(+). Its function is as follows. GTP hydrolase that promotes the GTP-dependent binding of aminoacyl-tRNA to the A-site of ribosomes during protein biosynthesis. This is Elongation factor Tu from Clostridium novyi (strain NT).